The chain runs to 202 residues: Cytochrome c oxidase assembly protein CtaG (202 aa).

The Cytoplasmic segment spans residues 1 to 13; sequence MSDKAAAPKKQGR. The chain crosses the membrane as a helical; Signal-anchor for type II membrane protein span at residues 14 to 36; it reads NNGAVVLMCLSFVFGMGAMSYAA. Residues 37 to 202 lie on the Periplasmic side of the membrane; it reads VPLYRIFCQV…GGAEKVEKKL (166 aa). The segment at 183 to 202 is disordered; sequence EGPKPLASNEGGAEKVEKKL.

The protein belongs to the COX11/CtaG family.

It is found in the cell inner membrane. Its function is as follows. Exerts its effect at some terminal stage of cytochrome c oxidase synthesis, probably by being involved in the insertion of the copper B into subunit I. This Rhizobium etli (strain CIAT 652) protein is Cytochrome c oxidase assembly protein CtaG.